A 222-amino-acid polypeptide reads, in one-letter code: uncharacterized protein (222 aa).

This is an uncharacterized protein from Archaeoglobus fulgidus (strain ATCC 49558 / DSM 4304 / JCM 9628 / NBRC 100126 / VC-16).